The sequence spans 228 residues: Cytidylate kinase (228 aa).

ATP is bound at residue 7 to 15 (GPVATGKST).

Belongs to the cytidylate kinase family. Type 1 subfamily.

Its subcellular location is the cytoplasm. The catalysed reaction is CMP + ATP = CDP + ADP. It carries out the reaction dCMP + ATP = dCDP + ADP. In Protochlamydia amoebophila (strain UWE25), this protein is Cytidylate kinase.